A 204-amino-acid chain; its full sequence is Proteasome subunit beta type-3 (204 aa).

Belongs to the peptidase T1B family. The 26S proteasome consists of a 20S proteasome core and two 19S regulatory subunits. The 20S proteasome core is composed of 28 subunits that are arranged in four stacked rings, resulting in a barrel-shaped structure. The two end rings are each formed by seven alpha subunits, and the two central rings are each formed by seven beta subunits. The catalytic chamber with the active sites is on the inside of the barrel.

It is found in the cytoplasm. The protein localises to the nucleus. Its function is as follows. Non-catalytic component of the proteasome, a multicatalytic proteinase complex which is characterized by its ability to cleave peptides with Arg, Phe, Tyr, Leu, and Glu adjacent to the leaving group at neutral or slightly basic pH. The proteasome has an ATP-dependent proteolytic activity. The protein is Proteasome subunit beta type-3 (pbs-3) of Caenorhabditis elegans.